A 300-amino-acid polypeptide reads, in one-letter code: Hairy/enhancer-of-split related with YRPW motif protein 1 (300 aa).

The segment at 1–52 (MKRGHDYSSSDSELDENIEVEKESADENGNLSSAAGSMSPSTSSQILARKRR) is disordered. Residues 32–44 (SSAAGSMSPSTSS) show a composition bias toward low complexity. The bHLH domain occupies 48 to 103 (ARKRRRGIIEKRRRDRINNSLSELRRLVPSAFEKQGSAKLEKAEILQMTVDHLKML). Residues 121–157 (YRSLGFRECLAEVARYLSIIEGMDTTDPLRVRLVSHL) form the Orange domain. Residues 199–210 (AHTSANSTSSST) are compositionally biased toward low complexity. 2 disordered regions span residues 199–232 (AHTS…LRVP) and 278–300 (LSPT…IGAF). The short motif at 290 to 293 (YRPW) is the YRPW motif element.

The protein belongs to the HEY family. In terms of assembly, efficient DNA binding requires dimerization with another bHLH protein. Binds DNA in the form of homodimer or more strongly as a heterodimer with hes1/hairy1 or hes4/hairy2b. Also weakly interacts with the bHLH proteins hes2, neurod1 and neurod4/ath3. Interacts (via Orange domain) with ccdc89/boip (via C-terminus).

It is found in the nucleus. Functionally, downstream effector of Notch signaling. Transcriptional repressor which binds preferentially to the canonical E box sequence 5'-CACGTG-3'. Acts as a suppressor of neurogenesis by antagonizing proneural gene function. Functions during floorplate development. Plays a role in pronephros formation in the inhibition of distal tubule and duct cell fates and the promotion of glomus and proximal tubule formation. This Xenopus tropicalis (Western clawed frog) protein is Hairy/enhancer-of-split related with YRPW motif protein 1 (hey1).